Here is a 139-residue protein sequence, read N- to C-terminus: MAVERTLSLIKPDAVKRHLIGAILSRFEQAGFRVVAAKMLHLTQAQAEGFYAEHQDKAFFPELVAYMISAPVLALVLEKENAVKDYRTLIGATNPAVAAEGTIRRDFAIDGRHNSVHGSDSLDSAKREIAYFFVESEIF.

Residues K11, F59, R87, T93, R104, and N114 each contribute to the ATP site. H117 functions as the Pros-phosphohistidine intermediate in the catalytic mechanism.

The protein belongs to the NDK family. In terms of assembly, homotetramer. Mg(2+) serves as cofactor.

The protein resides in the cytoplasm. The enzyme catalyses a 2'-deoxyribonucleoside 5'-diphosphate + ATP = a 2'-deoxyribonucleoside 5'-triphosphate + ADP. The catalysed reaction is a ribonucleoside 5'-diphosphate + ATP = a ribonucleoside 5'-triphosphate + ADP. Functionally, major role in the synthesis of nucleoside triphosphates other than ATP. The ATP gamma phosphate is transferred to the NDP beta phosphate via a ping-pong mechanism, using a phosphorylated active-site intermediate. The chain is Nucleoside diphosphate kinase from Pasteurella multocida (strain Pm70).